The following is a 209-amino-acid chain: HTLV-1 basic zipper factor (209 aa).

Positions 41-165 (EEEETVLDGL…KEKMQELGVD (125 aa)) are disordered. Basic and acidic residues-rich tracts occupy residues 72–87 (PRGETHRDRQRRAEEK) and 94–160 (REKE…EKMQ). Short sequence motifs (nuclear localization signal) lie at residues 87–92 (KRKRKK), 116–120 (RRKRA), and 137–141 (RRERK).

The protein belongs to the HTLV-1 HBZ protein family. As to quaternary structure, interacts with host ATF4; this interaction inhibits viral RNA transcriptional activation by preventing ATF4 binding to Tax-responsive elements. Interacts with host CREB1; this interaction inhibits host CREB1 transcriptional activity. Interacts with host JUN, JUNB and JUND. Interacts with host EP300 and CREBBP; these interactions inhibit the association of the coactivators with the viral promoter. Interacts with host UBR5; this interaction regulates HBZ protein stability. Interacts with XRCC5 and XRCC6. Interacts with IRF7 and IKBKE; this interaction modulates host interferon signaling. In terms of processing, ubiquitinated by host E3 ligase UBR5 leading to HBZ degradation.

The protein resides in the host nucleus. Enhances viral infectivity and persistence, and facilitates proliferation of HTLV-1-infected lymphocytes. Mechanistically, inhibits Tax-mediated viral replication and NF-kappa-B activation. Plays a role in allowing infected T-cells to escape the cytotoxic T-lymphocyte response by maintaining low levels of viral protein production. Also inhibits host EP300 histone acetyltransferase (HAT) activity, reducing levels of acetylated histone H3 at 'Lys-18' (H3K18ac) in infected cells. Contributes to the accumulation of chromosomal abnormalities by inhibiting double-stranded DNA breaks (DSB) repair through the NHEJ pathway. Participates in the modulation of host immune response at multiple levels contributing to abnormal interferon signaling and viral pathogenesis. This Human T-cell leukemia virus 1 (isolate Caribbea HS-35 subtype A) (HTLV-1) protein is HTLV-1 basic zipper factor (HBZ).